Reading from the N-terminus, the 553-residue chain is NAD(P)H-quinone oxidoreductase chain 4 2 (553 aa).

14 helical membrane-spanning segments follow: residues 6–26 (FPWL…IPVI), 34–54 (VRWF…YVFL), 87–107 (ISAP…LAAW), 115–135 (LFYF…VAQD), 136–156 (LLLF…LVSI), 169–189 (FLLY…AMAL), 210–230 (ALEL…LAIF), 244–264 (SAPV…YGLI), 276–296 (IYFA…GAFA), 312–332 (VSHM…GISG), 333–353 (AMLQ…LAGV), 376–396 (VFAL…MSGF), 418–438 (VVTV…LLSM), and 487–507 (IFIA…PQLA).

It belongs to the complex I subunit 4 family.

The protein localises to the cellular thylakoid membrane. The enzyme catalyses a plastoquinone + NADH + (n+1) H(+)(in) = a plastoquinol + NAD(+) + n H(+)(out). The catalysed reaction is a plastoquinone + NADPH + (n+1) H(+)(in) = a plastoquinol + NADP(+) + n H(+)(out). NDH-1 shuttles electrons from NAD(P)H, via FMN and iron-sulfur (Fe-S) centers, to quinones in the respiratory chain. The immediate electron acceptor for the enzyme in this species is believed to be plastoquinone. Couples the redox reaction to proton translocation (for every two electrons transferred, four hydrogen ions are translocated across the cytoplasmic membrane), and thus conserves the redox energy in a proton gradient. This Microcystis aeruginosa (strain NIES-843 / IAM M-2473) protein is NAD(P)H-quinone oxidoreductase chain 4 2.